The chain runs to 524 residues: Glucose-6-phosphate isomerase (524 aa).

Catalysis depends on Glu346, which acts as the Proton donor. Residues His377 and Lys492 contribute to the active site.

Belongs to the GPI family.

The protein localises to the cytoplasm. It catalyses the reaction alpha-D-glucose 6-phosphate = beta-D-fructose 6-phosphate. Its pathway is carbohydrate biosynthesis; gluconeogenesis. It participates in carbohydrate degradation; glycolysis; D-glyceraldehyde 3-phosphate and glycerone phosphate from D-glucose: step 2/4. Its function is as follows. Catalyzes the reversible isomerization of glucose-6-phosphate to fructose-6-phosphate. This chain is Glucose-6-phosphate isomerase, found in Chlamydia trachomatis serovar A (strain ATCC VR-571B / DSM 19440 / HAR-13).